We begin with the raw amino-acid sequence, 216 residues long: Transmembrane emp24 domain-containing protein eca (216 aa).

An N-terminal signal peptide occupies residues 1–20 (MRDQFISLALILCVLHSACG). At 21 to 182 (LYFHISETER…FRHTSESTNS (162 aa)) the chain is on the lumenal side. Positions 30–126 (RKCFIEEVPD…QLRVHLDIQV (97 aa)) constitute a GOLD domain. Residues 134-164 (AHVAQKEKLTELQLRIRQLLDQVEQITKEQN) are a coiled coil. Residues 183 to 203 (RVLWWSLAQTVVLVCMGFWQM) form a helical membrane-spanning segment. At 204–216 (RHLKSFFEAKKLV) the chain is on the cytoplasmic side. The Prevents secretion from ER motif lies at 213–216 (KKLV).

The protein belongs to the EMP24/GP25L family.

The protein resides in the endoplasmic reticulum membrane. Its function is as follows. Eca and bai are essential, though not redundant, for dorsoventral patterning of the embryo. Specifically required during early embryogenesis for the activity of maternal tkv, while the zygotic tkv is not affected. Involved in Golgi organization. The polypeptide is Transmembrane emp24 domain-containing protein eca (Drosophila melanogaster (Fruit fly)).